A 497-amino-acid chain; its full sequence is Homeotic protein empty spiracles (497 aa).

Disordered stretches follow at residues 34–117 (NDVS…HLSP), 161–262 (SPLQ…MMMP), and 441–497 (NRRT…DASH). Residues 35-50 (DVSTAGGNSTPDLSGP) are compositionally biased toward polar residues. The span at 51–68 (QSPPPGERNVPGSPPQTP) shows a compositional bias: pro residues. Residues 96 to 117 (PHAQQQQQQHLQAPHPHPHLSP) show a composition bias toward low complexity. Positions 161 to 176 (SPLQTRLSPETEQPQM) are enriched in polar residues. Composition is skewed to low complexity over residues 208-239 (PKSV…QQQQ) and 248-262 (PAMM…MMMP). Residues 391 to 450 (PKRIRTAFSPSQLLKLEHAFESNQYVVGAERKALAQNLNLSETQVKVWFQNRRTKHKRMQ) constitute a DNA-binding region (homeobox). The span at 470-497 (GDEDDDELIDMEMDECPSDEEHELDASH) shows a compositional bias: acidic residues.

The protein belongs to the EMX homeobox family.

Its subcellular location is the nucleus. Its function is as follows. Acts as a homeotic selector gene controlling antennal and mandibular segment identity. This Drosophila melanogaster (Fruit fly) protein is Homeotic protein empty spiracles (ems).